The sequence spans 554 residues: DNA ligase (554 aa).

Residue glutamate 253 participates in ATP binding. Lysine 255 serves as the catalytic N6-AMP-lysine intermediate. Arginine 260, arginine 275, glutamate 304, phenylalanine 344, arginine 418, and lysine 424 together coordinate ATP.

This sequence belongs to the ATP-dependent DNA ligase family. Requires Mg(2+) as cofactor.

The catalysed reaction is ATP + (deoxyribonucleotide)n-3'-hydroxyl + 5'-phospho-(deoxyribonucleotide)m = (deoxyribonucleotide)n+m + AMP + diphosphate.. Functionally, DNA ligase that seals nicks in double-stranded DNA during DNA replication, DNA recombination and DNA repair. The chain is DNA ligase from Haloarcula marismortui (strain ATCC 43049 / DSM 3752 / JCM 8966 / VKM B-1809) (Halobacterium marismortui).